The chain runs to 309 residues: Olfactory receptor 7A17 (309 aa).

At 1–25 the chain is on the extracellular side; that stretch reads MEPENDTGISEFVLLGLSEEPELQP. Asparagine 5 is a glycosylation site (N-linked (GlcNAc...) asparagine). Residues 26 to 46 form a helical membrane-spanning segment; the sequence is FLFGLFLSMYLVTVLGNLLII. At 47–54 the chain is on the cytoplasmic side; sequence LATISDSH. The chain crosses the membrane as a helical span at residues 55–75; that stretch reads LHTPMYFFLSNLSFADICFIS. At 76–99 the chain is on the extracellular side; it reads TTIPKMLINIQTQSRVITYAGCIT. A disulfide bridge connects residues cysteine 97 and cysteine 189. A helical transmembrane segment spans residues 100 to 120; the sequence is QMCFFVLFGGLDSLLLAVMAY. Over 121-139 the chain is Cytoplasmic; it reads DRFVAICHPLHYTVIMNPR. A helical membrane pass occupies residues 140–160; it reads LCGLLVLASWMIAALNSLSQS. Residues 161–197 lie on the Extracellular side of the membrane; that stretch reads LMVLWLSFCTDLEIPHFFCELNQVIHLACSDTFLNDM. The helical transmembrane segment at 198 to 217 threads the bilayer; the sequence is GMYFAAGLLAGGPLVGILCS. The Cytoplasmic segment spans residues 218–237; the sequence is YSKIVSSIRAISSAQGKYKA. Residues 238 to 258 traverse the membrane as a helical segment; it reads FSTCASHLSVVSLFCCTGLGV. The Extracellular portion of the chain corresponds to 259-271; the sequence is YLTSAATHNSHTS. A helical membrane pass occupies residues 272–292; the sequence is ATASVMYTVATPMLNPFIYSL. Topologically, residues 293–309 are cytoplasmic; that stretch reads RNKDIKRALKMSFRGKQ.

It belongs to the G-protein coupled receptor 1 family.

Its subcellular location is the cell membrane. Functionally, odorant receptor. In Homo sapiens (Human), this protein is Olfactory receptor 7A17 (OR7A17).